Consider the following 206-residue polypeptide: MEPLASNIQVLLQAAEFLERREREAEHGYASLCPHRSPGPIHRRKKRPPQAPGAQDSGRSVHNELEKRRRAQLKRCLERLKQQMPLGADCARYTTLSLLRRARMHIQKLEDQEQRARQLKERLRSKQQSLQRQLEQLRGLAGAAERERLRADSLDSSGLSSERSDSDQEELEVDVESLVFGGEAELLRGFVAGQEHSYSHGGGAWL.

The tract at residues 8-25 (IQVLLQAAEFLERREREA) is interaction with SIN3A and SIN3B. 2 disordered regions span residues 25-67 (AEHG…ELEK) and 146-171 (RERL…QEEL). The 53-residue stretch at 57–109 (SGRSVHNELEKRRRAQLKRCLERLKQQMPLGADCARYTTLSLLRRARMHIQKL) folds into the bHLH domain.

In terms of assembly, efficient DNA binding requires dimerization with another bHLH protein. Binds DNA as a heterodimer with MAX. Interacts with SIN3A AND SIN3B. Interacts with RNF17.

It is found in the nucleus. Its function is as follows. Transcriptional repressor. Binds with MAX to form a sequence-specific DNA-binding protein complex which recognizes the core sequence 5'-CAC[GA]TG-3'. Antagonizes MYC transcriptional activity by competing for MAX and suppresses MYC dependent cell transformation. The sequence is that of Max dimerization protein 3 (MXD3) from Homo sapiens (Human).